A 275-amino-acid chain; its full sequence is Transcription regulator AOL_s00215g275 (275 aa).

Disordered regions lie at residues 13–65 and 84–108; these read TPLP…SSIG and ILQQKSRHQNQPSRRHKQKNRRQRL. A compositionally biased stretch (polar residues) spans 14–26; the sequence is PLPSLNSSRSPQR. A compositionally biased stretch (low complexity) spans 27–40; it reads TPSLGSSSTSSLSP. The span at 47–60 shows a compositional bias: polar residues; sequence TPSTPESNDSGLTL. Positions 88 to 106 are enriched in basic residues; that stretch reads KSRHQNQPSRRHKQKNRRQ.

Its function is as follows. Regulatory protein; part of the gene cluster that mediates the biosynthesis of sesquiterpenyl epoxy-cyclohexenoids (SECs) such as anthrobotrisins and arthrosporols, metabolites that possess a novel hybrid carbon skeleton consisting of a polyketide-derived epoxycyclohexenol combined with a terpenoid-derived monocyclic sesquiterpenol substructure (PKS-PTS hybrid). The SEC pathway plays an important role for fungal soil colonization via decreasing fungal nematode-capturing ability. AOL_s00215g275 can perform multiple functions in fungal growth and development via regulating the SEC biosynthesis, TCA cycle, and septa formation. Also involved in inhibiting conidial formation, germination, and nematicidal activity but promotes trap production. Plays a role in fungal resistances and significantly regulates the fungal morphology and responses to chemical stressors such as cell-wall-perturbing agents (SDS and Congo red), osmotic agents (NaCl and sorbitol), or the oxidant H(2)O(2). This is Transcription regulator AOL_s00215g275 from Arthrobotrys oligospora (strain ATCC 24927 / CBS 115.81 / DSM 1491) (Nematode-trapping fungus).